Consider the following 393-residue polypeptide: Formate-dependent phosphoribosylglycinamide formyltransferase (393 aa).

Residues 22–23 and glutamate 82 contribute to the N(1)-(5-phospho-beta-D-ribosyl)glycinamide site; that span reads EL. ATP is bound by residues arginine 114, lysine 155, 160 to 165, 195 to 198, and glutamate 203; these read SSGKGQ and EGFI. One can recognise an ATP-grasp domain in the interval 119–308; sequence RLAAEELDLP…QFALHARAIL (190 aa). Mg(2+) is bound by residues glutamate 267 and glutamate 279. Residues aspartate 286, lysine 356, and 363-364 contribute to the N(1)-(5-phospho-beta-D-ribosyl)glycinamide site; that span reads RR.

The protein belongs to the PurK/PurT family. In terms of assembly, homodimer.

It carries out the reaction N(1)-(5-phospho-beta-D-ribosyl)glycinamide + formate + ATP = N(2)-formyl-N(1)-(5-phospho-beta-D-ribosyl)glycinamide + ADP + phosphate + H(+). The protein operates within purine metabolism; IMP biosynthesis via de novo pathway; N(2)-formyl-N(1)-(5-phospho-D-ribosyl)glycinamide from N(1)-(5-phospho-D-ribosyl)glycinamide (formate route): step 1/1. In terms of biological role, involved in the de novo purine biosynthesis. Catalyzes the transfer of formate to 5-phospho-ribosyl-glycinamide (GAR), producing 5-phospho-ribosyl-N-formylglycinamide (FGAR). Formate is provided by PurU via hydrolysis of 10-formyl-tetrahydrofolate. This chain is Formate-dependent phosphoribosylglycinamide formyltransferase, found in Pseudomonas fluorescens (strain Pf0-1).